A 215-amino-acid polypeptide reads, in one-letter code: MVLIMRVSPPEHGLLYTANNIKLKLGDKVVGEGTVYIAQNTLSWQPTELAEGISIEWKQVSLHGISSNPRKCIYFMLDHKVEWNGVYGDPPQQAVNGRNGGGSEAEVDEGNGSDEHDEDDNFEDAVDEQFGEVTECWLMPEDIHTVDTMYSAMTTCQALHPDSANSDSEDSDPMQDAGGLEDEAMEEDDALTLGRNGVQNLSLDDDEERFEDADE.

2 disordered regions span residues 88–120 (GDPPQQAVNGRNGGGSEAEVDEGNGSDEHDEDD) and 160–215 (HPDS…DADE). 3 stretches are compositionally biased toward acidic residues: residues 105–120 (AEVDEGNGSDEHDEDD), 167–190 (DSEDSDPMQDAGGLEDEAMEEDDA), and 203–215 (LDDDEERFEDADE).

It belongs to the pICln (TC 1.A.47) family. As to quaternary structure, component of the methylosome, a 20S complex containing at least CLNS1A/pICln, PRMT5/SKB1 and WDR77/MEP50; may mediate SNRPD1 and SNRPD3 methylation. Forms a 6S pICln-Sm complex composed of CLNS1A/pICln, SNRPD1, SNRPD2, SNRPE, SNRPF and SNRPG; ring-like structure where CLNS1A/pICln mimics additional Sm proteins and which is unable to assemble into the core snRNP.

Its subcellular location is the cytoplasm. The protein resides in the cytosol. It is found in the nucleus. The protein localises to the cytoskeleton. Its function is as follows. Involved in both the assembly of spliceosomal snRNPs and the methylation of Sm proteins. Chaperone that regulates the assembly of spliceosomal U1, U2, U4 and U5 small nuclear ribonucleoproteins (snRNPs), the building blocks of the spliceosome, and thereby plays an important role in the splicing of cellular pre-mRNAs. Most spliceosomal snRNPs contain a common set of Sm proteins SNRPB, SNRPD1, SNRPD2, SNRPD3, SNRPE, SNRPF and SNRPG that assemble in a heptameric protein ring on the Sm site of the small nuclear RNA to form the core snRNP (Sm core). In the cytosol, the Sm proteins SNRPD1, SNRPD2, SNRPE, SNRPF and SNRPG are trapped in an inactive 6S pICln-Sm complex by the chaperone CLNS1A that controls the assembly of the core snRNP. Dissociation by the SMN complex of CLNS1A from the trapped Sm proteins and their transfer to an SMN-Sm complex triggers the assembly of core snRNPs and their transport to the nucleus. The protein is Methylosome subunit pICln (icln) of Drosophila melanogaster (Fruit fly).